The chain runs to 270 residues: UPF0354 protein BcerKBAB4_4524 (270 aa).

It belongs to the UPF0354 family.

The protein is UPF0354 protein BcerKBAB4_4524 of Bacillus mycoides (strain KBAB4) (Bacillus weihenstephanensis).